A 571-amino-acid chain; its full sequence is Sulfite reductase [NADPH] hemoprotein beta-component (571 aa).

Positions 436, 442, 481, and 485 each coordinate [4Fe-4S] cluster. Cys-485 serves as a coordination point for siroheme.

The protein belongs to the nitrite and sulfite reductase 4Fe-4S domain family. In terms of assembly, alpha(8)-beta(8). The alpha component is a flavoprotein, the beta component is a hemoprotein. Siroheme serves as cofactor. [4Fe-4S] cluster is required as a cofactor.

It carries out the reaction hydrogen sulfide + 3 NADP(+) + 3 H2O = sulfite + 3 NADPH + 4 H(+). It functions in the pathway sulfur metabolism; hydrogen sulfide biosynthesis; hydrogen sulfide from sulfite (NADPH route): step 1/1. Functionally, component of the sulfite reductase complex that catalyzes the 6-electron reduction of sulfite to sulfide. This is one of several activities required for the biosynthesis of L-cysteine from sulfate. This is Sulfite reductase [NADPH] hemoprotein beta-component from Bacillus velezensis (strain DSM 23117 / BGSC 10A6 / LMG 26770 / FZB42) (Bacillus amyloliquefaciens subsp. plantarum).